The chain runs to 387 residues: uncharacterized protein (387 aa).

Residues 1 to 27 (MKKWMITIAMLILAGIALFVFISPLKS) form the signal peptide.

This is an uncharacterized protein from Bacillus subtilis (strain 168).